The chain runs to 210 residues: FMN-dependent NADH:quinone oxidoreductase (210 aa).

Residues S9 and 15–17 (SHS) each bind FMN.

It belongs to the azoreductase type 1 family. Homodimer. It depends on FMN as a cofactor.

It carries out the reaction 2 a quinone + NADH + H(+) = 2 a 1,4-benzosemiquinone + NAD(+). The enzyme catalyses N,N-dimethyl-1,4-phenylenediamine + anthranilate + 2 NAD(+) = 2-(4-dimethylaminophenyl)diazenylbenzoate + 2 NADH + 2 H(+). Its function is as follows. Quinone reductase that provides resistance to thiol-specific stress caused by electrophilic quinones. Functionally, also exhibits azoreductase activity. Catalyzes the reductive cleavage of the azo bond in aromatic azo compounds to the corresponding amines. In Mesorhizobium japonicum (strain LMG 29417 / CECT 9101 / MAFF 303099) (Mesorhizobium loti (strain MAFF 303099)), this protein is FMN-dependent NADH:quinone oxidoreductase.